We begin with the raw amino-acid sequence, 151 residues long: MVVNKQGSVKSIKRKARKSRKVTTGRAKEFSYKGYTLEQLQEMSLEELIKILPARARRSLSREMNHDQKKLVEKLEGDYDDIKTHVRDVIILPSYVGKIVEVYNGNSYSKFEIKPEMIGHYLGEFVMTRKEVKHSGPGVGATRSSKFMPLK.

The tract at residues M1 to T23 is disordered. The segment covering S11–T23 has biased composition (basic residues).

Belongs to the universal ribosomal protein uS19 family.

Protein S19 forms a complex with S13 that binds strongly to the 16S ribosomal RNA. In Thermoplasma volcanium (strain ATCC 51530 / DSM 4299 / JCM 9571 / NBRC 15438 / GSS1), this protein is Small ribosomal subunit protein uS19 (rps19).